We begin with the raw amino-acid sequence, 1118 residues long: Protein argonaute 1B (1118 aa).

Disordered regions lie at residues 1-175 (MALQ…SRTV) and 188-246 (APMV…RFPL). Basic residues predominate over residues 10–24 (PHHHQVPIMVKKKRT). A compositionally biased stretch (low complexity) spans 25-35 (GSGSTGESSGE). Gly residues-rich tracts occupy residues 54 to 92 (QHGG…HHPG), 100 to 110 (GRGGPGSHHPG), and 118 to 128 (GRGGSGSHHPG). Low complexity-rich tracts occupy residues 148–157 (RGGMPQPYYG) and 193–219 (PTPS…QFQQ). Polar residues predominate over residues 220–241 (LATRDQSSTSQAIQIAPPSSKS). The 114-residue stretch at 457-570 (PVIDFVAQLL…LPMEVCKIVE (114 aa)) folds into the PAZ domain. Positions 746–1067 (LLIVILPDNN…AAFRARFYME (322 aa)) constitute a Piwi domain.

The protein belongs to the argonaute family. Ago subfamily.

Its function is as follows. Probably involved in the RNA silencing pathway. May bind to short RNAs such as microRNAs (miRNAs) or short interfering RNAs (siRNAs), and represses the translation of mRNAs which are complementary to them. In Oryza sativa subsp. japonica (Rice), this protein is Protein argonaute 1B (AGO1B).